The following is an 89-amino-acid chain: Putative membrane protein insertion efficiency factor (89 aa).

Positions 69-89 are disordered; it reads DPVPPAHTERGGTMCPSRLPE.

Belongs to the UPF0161 family.

It localises to the cell inner membrane. Its function is as follows. Could be involved in insertion of integral membrane proteins into the membrane. This Paramagnetospirillum magneticum (strain ATCC 700264 / AMB-1) (Magnetospirillum magneticum) protein is Putative membrane protein insertion efficiency factor.